Reading from the N-terminus, the 32-residue chain is Peptide tarsal-less AA (32 aa).

The tract at residues 1-32 (MLDPTGTYRRPRDTQDSRQKRRQDCLDPTGQY) is disordered. Copy 1 of the repeat occupies 2 to 8 (LDPTGTY). A 2 X 7 AA repeats of L-D-P-T-G-[TQ]-Y region spans residues 2 to 32 (LDPTGTYRRPRDTQDSRQKRRQDCLDPTGQY). The segment covering 10 to 25 (RPRDTQDSRQKRRQDC) has biased composition (basic and acidic residues). Repeat unit 2 spans residues 26 to 32 (LDPTGQY).

The protein localises to the cytoplasm. Its subcellular location is the nucleus. In terms of biological role, one of four peptides (tal-1A, tal-2A, tal-3A and tal-AA) produced from a polycistronic gene that function redundantly in several developmental processes. Required in early stages of leg development for the intercalation of the tarsal segments during the mid-third instar stage and later for tarsal joint formation. Promotes the post-translational modification of ovo isoform B (svb) into its active form which in turn initiates trichome development and promotes tarsal joint development. This is likely due to recruitment of the E3 ubiquitin-protein ligase Ubr3 to svb for ubiquitination of its N-terminus, converting svb into a transcriptional activator. Also enhances interaction of Ubr3 with Diap1. Required for correct wing and leg formation through its regulation of several genes including those in the Notch signaling pathway. Essential for denticle formation and may have a role in the developmental timing of trichome differentiation. Essential for the development of taenidial folds in the trachea. In Drosophila melanogaster (Fruit fly), this protein is Peptide tarsal-less AA.